A 123-amino-acid polypeptide reads, in one-letter code: Modulator protein MzrA (123 aa).

Topologically, residues 1–8 are cytoplasmic; sequence MIKRPRWQ. Residues 9 to 29 form a helical membrane-spanning segment; sequence YVLLIALALLALATLLVPCMV. Residues 30-123 lie on the Periplasmic side of the membrane; it reads RTESELRIRA…EFARAPLNLG (94 aa).

This sequence belongs to the MzrA family. Interacts with EnvZ.

Its subcellular location is the cell inner membrane. In terms of biological role, modulates the activity of the EnvZ/OmpR two-component regulatory system, probably by directly modulating EnvZ enzymatic activity and increasing stability of phosphorylated OmpR. This is Modulator protein MzrA from Serratia proteamaculans (strain 568).